The sequence spans 429 residues: Dual-specificity RNA methyltransferase RlmN (429 aa).

Residues 1–23 (MRAMQTHTEIAPMPIPGHVDPVP) are disordered. Residue E128 is the Proton acceptor of the active site. The region spanning 134-397 (DADRGTLCVS…APVRTPRGRD (264 aa)) is the Radical SAM core domain. A disulfide bridge links C141 with C402. Residues C148, C152, and C155 each contribute to the [4Fe-4S] cluster site. S-adenosyl-L-methionine contacts are provided by residues 226–227 (GE), S258, 280–282 (SLH), and N359. Residue C402 is the S-methylcysteine intermediate of the active site.

This sequence belongs to the radical SAM superfamily. RlmN family. [4Fe-4S] cluster serves as cofactor.

It is found in the cytoplasm. It carries out the reaction adenosine(2503) in 23S rRNA + 2 reduced [2Fe-2S]-[ferredoxin] + 2 S-adenosyl-L-methionine = 2-methyladenosine(2503) in 23S rRNA + 5'-deoxyadenosine + L-methionine + 2 oxidized [2Fe-2S]-[ferredoxin] + S-adenosyl-L-homocysteine. It catalyses the reaction adenosine(37) in tRNA + 2 reduced [2Fe-2S]-[ferredoxin] + 2 S-adenosyl-L-methionine = 2-methyladenosine(37) in tRNA + 5'-deoxyadenosine + L-methionine + 2 oxidized [2Fe-2S]-[ferredoxin] + S-adenosyl-L-homocysteine. Functionally, specifically methylates position 2 of adenine 2503 in 23S rRNA and position 2 of adenine 37 in tRNAs. m2A2503 modification seems to play a crucial role in the proofreading step occurring at the peptidyl transferase center and thus would serve to optimize ribosomal fidelity. The sequence is that of Dual-specificity RNA methyltransferase RlmN from Novosphingobium aromaticivorans (strain ATCC 700278 / DSM 12444 / CCUG 56034 / CIP 105152 / NBRC 16084 / F199).